The sequence spans 142 residues: Large ribosomal subunit protein uL13 (142 aa).

Belongs to the universal ribosomal protein uL13 family. In terms of assembly, part of the 50S ribosomal subunit.

This protein is one of the early assembly proteins of the 50S ribosomal subunit, although it is not seen to bind rRNA by itself. It is important during the early stages of 50S assembly. The polypeptide is Large ribosomal subunit protein uL13 (Caldicellulosiruptor saccharolyticus (strain ATCC 43494 / DSM 8903 / Tp8T 6331)).